Here is a 314-residue protein sequence, read N- to C-terminus: Lipid A biosynthesis acyltransferase 2 (314 aa).

A helical membrane pass occupies residues 17–37 (LSPVYWFTWFVLGMIAGISMF). The HXXXXD motif motif lies at 137–142 (HGWSVD).

The protein belongs to the LpxL/LpxM/LpxP family. LpxM subfamily.

The protein resides in the cell inner membrane. It carries out the reaction an alpha-Kdo-(2-&gt;4)-alpha-Kdo-(2-&gt;6)-(acyl)-lipid IVA + a fatty acyl-[ACP] = an alpha-Kdo-(2-&gt;4)-alpha-Kdo-(2-&gt;6)-lipid A + holo-[ACP]. The protein operates within glycolipid biosynthesis; KDO(2)-lipid A biosynthesis; KDO(2)-lipid A from CMP-3-deoxy-D-manno-octulosonate and lipid IV(A): step 4/4. Its pathway is bacterial outer membrane biogenesis; lipopolysaccharide biosynthesis. Catalyzes the transfer of an acyl chain from an acyl-[acyl-carrier-protein] (ACP) to a Kdo(2)-(acyl)-lipid IV(A) to form a Kdo(2)-lipid A. The sequence is that of Lipid A biosynthesis acyltransferase 2 from Shigella flexneri.